An 89-amino-acid polypeptide reads, in one-letter code: Small ribosomal subunit protein uS15 (89 aa).

Belongs to the universal ribosomal protein uS15 family. As to quaternary structure, part of the 30S ribosomal subunit. Forms a bridge to the 50S subunit in the 70S ribosome, contacting the 23S rRNA.

In terms of biological role, one of the primary rRNA binding proteins, it binds directly to 16S rRNA where it helps nucleate assembly of the platform of the 30S subunit by binding and bridging several RNA helices of the 16S rRNA. Its function is as follows. Forms an intersubunit bridge (bridge B4) with the 23S rRNA of the 50S subunit in the ribosome. This chain is Small ribosomal subunit protein uS15, found in Caulobacter vibrioides (strain NA1000 / CB15N) (Caulobacter crescentus).